Consider the following 309-residue polypeptide: Homoserine O-acetyltransferase (309 aa).

Residue Cys-142 is the Acyl-thioester intermediate of the active site. Substrate-binding residues include Lys-163 and Ser-192. The Proton acceptor role is filled by His-235. Glu-237 is a catalytic residue. Arg-249 is a substrate binding site.

The protein belongs to the MetA family.

It is found in the cytoplasm. The enzyme catalyses L-homoserine + acetyl-CoA = O-acetyl-L-homoserine + CoA. Its pathway is amino-acid biosynthesis; L-methionine biosynthesis via de novo pathway; O-acetyl-L-homoserine from L-homoserine: step 1/1. Its function is as follows. Transfers an acetyl group from acetyl-CoA to L-homoserine, forming acetyl-L-homoserine. This Methanomethylophilus alvi (strain Mx1201) protein is Homoserine O-acetyltransferase.